A 458-amino-acid polypeptide reads, in one-letter code: KAT8 regulatory NSL complex subunit 2 (458 aa).

K78 is covalently cross-linked (Glycyl lysine isopeptide (Lys-Gly) (interchain with G-Cter in SUMO2)). Residues E126–K182 are disordered. The residue at position 131 (T131) is a Phosphothreonine. The segment covering S135 to D144 has biased composition (basic and acidic residues). Residues S147, S149, S168, S172, and S175 each carry the phosphoserine modification. Residues D167–E178 are compositionally biased toward acidic residues. Positions D308–F364 are required for interaction with other NSL complex members. The tract at residues Q419–S458 is disordered.

As to quaternary structure, component of the NSL complex at least composed of KAT8/MOF, KANSL1, KANSL2, KANSL3, MCRS1, PHF20, OGT1/OGT, WDR5 and HCFC1.

It is found in the nucleus. The protein resides in the mitochondrion. Non-catalytic component of the NSL histone acetyltransferase complex, a multiprotein complex that mediates histone H4 acetylation at 'Lys-5'- and 'Lys-8' (H4K5ac and H4K8ac) at transcription start sites and promotes transcription initiation. Required for NSL complex stability and for transcription of intraciliary transport genes in both ciliated and non-ciliated cells by regulating histone H4 acetylation at 'Lys-5'- and 'Lys-12' (H4K5ac and H4K12ac). This is necessary for cilium assembly in ciliated cells and for organization of the microtubule cytoskeleton in non-ciliated cells. Required within the NSL complex to maintain nuclear architecture stability by promoting KAT8-mediated acetylation of lamin LMNA. The sequence is that of KAT8 regulatory NSL complex subunit 2 (KANSL2) from Bos taurus (Bovine).